The sequence spans 79 residues: Gas vesicle protein A2 (79 aa).

The interval 9-19 (LAEVLDRVLDK) is alpha helix 1. A beta-strand 1 region spans residues 23–31 (VDVWARISL). Residues 32–34 (VGI) are beta turn. The tract at residues 35-43 (EILTVEARV) is beta-strand 2. The interval 48 to 67 (VDTFLHYAEEIAKIEQAELT) is alpha helix 2.

This sequence belongs to the gas vesicle GvpA family. As to quaternary structure, the gas vesicle shell is 2 nm thick and consists of a single layer of this protein. It forms helical ribs nearly perpendicular to the long axis of the vesicle.

Its subcellular location is the gas vesicle shell. In terms of biological role, gas vesicles are hollow, gas filled proteinaceous nanostructures found in several microbial planktonic microorganisms. They allow positioning of halobacteria at the optimal depth for growth in the poorly aerated shallow brine pools of their habitat. GvpA forms the gas vesicle shell. This protein can replace the p-gvpA gene in the p-vac locus and increases the critical collapse pressure (CCP) of hybrid gas vesicles from 0.66 MPa to 0.90 MPa. In stationary phase gas vesicles about 30 times more GvpA1 is found than GvpA2. Functionally, expression of 2 c-vac DNA fragments containing 2 divergently transcribed regions (gvpE-gvpF-gvpG-gvpH-gvpI-gvpJ-gvpK-gvpL-gvpM and gvpA-gvpC-gvpN-gvpO) allows H.volcanii to produce gas vesicles. All site-directed mutagenesis is tested in H.volcanii. The polypeptide is Gas vesicle protein A2 (Halobacterium salinarum (strain ATCC 700922 / JCM 11081 / NRC-1) (Halobacterium halobium)).